A 243-amino-acid chain; its full sequence is Terpene cyclase janB (243 aa).

7 consecutive transmembrane segments (helical) span residues 19–39 (LADLFVLGMGLGWVINYVGMV), 48–68 (YGMAIMPLCCNIAWEIVYCVF), 77–97 (LGVFAMGLLINFGVMYAAIIF), 112–132 (LPWIFCIGVLGFLTGHLALAA), 134–154 (IGPSLAYSWGAVVCQLLLSVG), 172–194 (LWLSRFLGSCCTVGFASLRWMYW), and 205–225 (LVLWSLAVFLMVDGSYGVCFW).

The protein belongs to the paxB family.

The protein resides in the membrane. Its pathway is secondary metabolite biosynthesis. Functionally, terpene cyclase; part of the gene cluster that mediates the biosynthesis of the indole diterpenes janthitremanes such as shearinine K or shearinine A. The geranylgeranyl diphosphate (GGPP) synthase janG catalyzes the first step in janthitremane biosynthesis via conversion of farnesyl pyrophosphate and isopentyl pyrophosphate into geranylgeranyl pyrophosphate (GGPP). Condensation of indole-3-glycerol phosphate with GGPP by the prenyl transferase janC then forms 3-geranylgeranylindole (3-GGI). Epoxidation by the FAD-dependent monooxygenase janM leads to a epoxidized-GGI that is substrate of the terpene cyclase janB for cyclization to yield paspaline. Paspaline is subsequently converted to 13-desoxypaspaline by the cytochrome P450 monooxygenase janP, via beta-PC-M6 in a series of alpha-face oxidations. The cytochrome P450 monooxygenase janQ is proposed to carry out sequential beta-face oxidation steps at C-7 and C-13 of 13-desoxypaspaline to form paspalicine and paspalinine respectively. The indole diterpene prenyltransferase janD may then convert paspalinine into shearinine K which is substrate of janO and/or additional enzymes for oxidation and cyclization to generate shearinine A. This chain is Terpene cyclase janB, found in Penicillium janthinellum (Penicillium vitale).